Consider the following 194-residue polypeptide: ATP-dependent Clp protease proteolytic subunit (194 aa).

S98 serves as the catalytic Nucleophile. H123 is an active-site residue.

The protein belongs to the peptidase S14 family. As to quaternary structure, fourteen ClpP subunits assemble into 2 heptameric rings which stack back to back to give a disk-like structure with a central cavity, resembling the structure of eukaryotic proteasomes.

The protein localises to the cytoplasm. It carries out the reaction Hydrolysis of proteins to small peptides in the presence of ATP and magnesium. alpha-casein is the usual test substrate. In the absence of ATP, only oligopeptides shorter than five residues are hydrolyzed (such as succinyl-Leu-Tyr-|-NHMec, and Leu-Tyr-Leu-|-Tyr-Trp, in which cleavage of the -Tyr-|-Leu- and -Tyr-|-Trp bonds also occurs).. Cleaves peptides in various proteins in a process that requires ATP hydrolysis. Has a chymotrypsin-like activity. Plays a major role in the degradation of misfolded proteins. The chain is ATP-dependent Clp protease proteolytic subunit from Syntrophotalea carbinolica (strain DSM 2380 / NBRC 103641 / GraBd1) (Pelobacter carbinolicus).